The primary structure comprises 644 residues: Chaperone protein DnaK (644 aa).

A Phosphothreonine; by autocatalysis modification is found at Thr-199. Residues 602–644 (LYAEQSAQQQGSAGATGGEQPKADKAADDGVVDAEFEEVKDDK) form a disordered region. Residues 604–614 (AEQSAQQQGSA) show a composition bias toward low complexity. Over residues 631 to 644 (GVVDAEFEEVKDDK) the composition is skewed to acidic residues.

Belongs to the heat shock protein 70 family.

Acts as a chaperone. The sequence is that of Chaperone protein DnaK from Teredinibacter turnerae (strain ATCC 39867 / T7901).